Here is a 766-residue protein sequence, read N- to C-terminus: Single-minded homolog 1 (766 aa).

In terms of domain architecture, bHLH spans Met-1–Arg-53. 2 PAS domains span residues Gly-77–His-147 and Pro-218–Gly-288. Positions Thr-292–Thr-335 constitute a PAC domain. In terms of domain architecture, Single-minded C-terminal spans Glu-336–Ser-766. A compositionally biased stretch (polar residues) spans Ala-353–Thr-365. 3 disordered regions span residues Ala-353 to Asp-431, Trp-528 to Lys-563, and Ser-642 to Asn-662. Residues Arg-368–Tyr-387 carry the Nuclear localization signal motif. Low complexity predominate over residues Ser-373–Ser-385. Residues His-394–Ser-404 show a composition bias toward basic and acidic residues. Positions Asp-649–Asn-662 are enriched in polar residues.

In terms of assembly, efficient DNA binding requires dimerization with another bHLH protein. Heterodimer; forms a heterodimer with ARNT, ARNT2.

It localises to the nucleus. Functionally, transcriptional factor that may have pleiotropic effects during embryogenesis and in the adult. The sequence is that of Single-minded homolog 1 (SIM1) from Pan troglodytes (Chimpanzee).